The sequence spans 688 residues: Sialic acid-binding Ig-like lectin 10 (688 aa).

The N-terminal stretch at 1-17 is a signal peptide; sequence MSLLLFLLSFLLDGPQG. Residues 18-543 are Extracellular-facing; sequence QMESYFLQVQ…DKDSATAFSK (526 aa). The Ig-like V-type domain occupies 26–138; it reads VQRIVKAQEG…SFKEEFRLQV (113 aa). 3 cysteine pairs are disulfide-bonded: Cys37-Cys172, Cys42-Cys102, and Cys163-Cys214. Arg120 is a binding site for N-acetylneuraminate. Residues 145 to 228 form the Ig-like C2-type 1 domain; the sequence is PDIFIPEVLE…SRMSTQRTVR (84 aa). Asn195 and Asn246 each carry an N-linked (GlcNAc...) asparagine glycan. 2 Ig-like C2-type domains span residues 250–334 and 339–436; these read PDLH…LDLS and PQDL…LSLS. Disulfide bonds link Cys271–Cys318 and Cys375–Cys420. Residues 544 to 564 form a helical membrane-spanning segment; the sequence is GAVLGFGITALLALCLIVVIV. Residues 565-688 lie on the Cytoplasmic side of the membrane; that stretch reads KTLQKKGTQE…YSDYTEVRVH (124 aa). The short motif at 588 to 593 is the ITIM motif 1 element; sequence LDYINV. Residues 602–656 form a disordered region; the sequence is RNWKAEPDAPSRSSPLDTHFPKPKKKQKDPHFTYPGCPDPTSSSQVPVSENNPEE. The segment covering 641–652 has biased composition (polar residues); sequence PTSSSQVPVSEN. Positions 657-662 match the ITIM motif 2 motif; that stretch reads LHYAAL. At Tyr659 the chain carries Phosphotyrosine.

It belongs to the immunoglobulin superfamily. SIGLEC (sialic acid binding Ig-like lectin) family. As to quaternary structure, interacts with PTPN6/SHP-1 upon phosphorylation. Interacts with NCF1. Interacts with CD24; the probable CD24:SIGLEC10 complex is proposed to inhibit HGMB1-mediated tissue damage immune response. Interacts with HMGB1; the interaction is dependent on CD24. Associates with membrane IgM on the B cell surface. Interacts with RIGI, CBL and PTPN11. In terms of processing, phosphorylation of Tyr-659 is involved in binding to PTPN6. In terms of tissue distribution, expressed in B cells with high levels in pre-B cells and B1a cells of the peritoneal cavity.

The protein localises to the cell membrane. Functionally, putative adhesion molecule that mediates sialic-acid dependent binding to cells. Preferentially binds to alpha-2,3- or alpha-2,6-linked sialic acid. The sialic acid recognition site may be masked by cis interactions with sialic acids on the same cell surface. In the immune response, seems to act as an inhibitory receptor upon ligand induced tyrosine phosphorylation by recruiting cytoplasmic phosphatase(s) via their SH2 domain(s) that block signal transduction through dephosphorylation of signaling molecules. Involved in negative regulation of B-cell antigen receptor signaling and specifically acts on B1 cells to inhibit Ca(2+) signaling, cellular expansion and antibody secretion. The inhibition of B cell activation is dependent on PTPN6/SHP-1. In association with CD24 may be involved in the selective suppression of the immune response to danger-associated molecular patterns (DAMPs) such as HMGB1, HSP70 and HSP90. In association with CD24 may regulate the immune repsonse of natural killer (NK) cells. Plays a role in the control of autoimmunity. During initiation of adaptive immune responses by CD8-alpha(+) dendritic cells inhibits cross-presentation by impairing the formation of MHC class I-peptide complexes. The function seems to implicate recruitment of PTPN6/SHP-1, which dephosphorylates NCF1 of the NADPH oxidase complex consequently promoting phagosomal acidification. (Microbial infection) During infection by RNA viruses inhibits RIG-I signaling in macrophages by promoting its CBL-dependent ubiquitination and degradation via PTPN11/SHP-2. The polypeptide is Sialic acid-binding Ig-like lectin 10 (Siglec10) (Mus musculus (Mouse)).